Here is a 329-residue protein sequence, read N- to C-terminus: GTPase Obg (329 aa).

Positions 1–159 (MQFIDQAIID…WSLQLELKLL (159 aa)) constitute an Obg domain. An OBG-type G domain is found at 160–328 (AEVGIIGLPN…LLSSIWNELG (169 aa)). ATP is bound by residues 166 to 173 (GLPNAGKS), 191 to 195 (FTTLI), 213 to 216 (DIPG), 280 to 283 (NKKE), and 309 to 311 (SAV). Mg(2+)-binding residues include Ser173 and Thr193.

Belongs to the TRAFAC class OBG-HflX-like GTPase superfamily. OBG GTPase family. In terms of assembly, monomer. It depends on Mg(2+) as a cofactor.

The protein localises to the cytoplasm. Its function is as follows. An essential GTPase which binds GTP, GDP and possibly (p)ppGpp with moderate affinity, with high nucleotide exchange rates and a fairly low GTP hydrolysis rate. Plays a role in control of the cell cycle, stress response, ribosome biogenesis and in those bacteria that undergo differentiation, in morphogenesis control. This Prochlorococcus marinus (strain NATL2A) protein is GTPase Obg.